Here is a 634-residue protein sequence, read N- to C-terminus: Threonine--tRNA ligase (634 aa).

One can recognise a TGS domain in the interval 1 to 61 (MFEVKLKDGS…DSDCEVQFVK (61 aa)). The segment at 242–532 (DHRKIGKEMG…LIEHYAGKFP (291 aa)) is catalytic. Zn(2+) is bound by residues Cys-333, His-384, and His-509.

This sequence belongs to the class-II aminoacyl-tRNA synthetase family. In terms of assembly, homodimer. Zn(2+) serves as cofactor.

The protein resides in the cytoplasm. The catalysed reaction is tRNA(Thr) + L-threonine + ATP = L-threonyl-tRNA(Thr) + AMP + diphosphate + H(+). In terms of biological role, catalyzes the attachment of threonine to tRNA(Thr) in a two-step reaction: L-threonine is first activated by ATP to form Thr-AMP and then transferred to the acceptor end of tRNA(Thr). Also edits incorrectly charged L-seryl-tRNA(Thr). In Finegoldia magna (strain ATCC 29328 / DSM 20472 / WAL 2508) (Peptostreptococcus magnus), this protein is Threonine--tRNA ligase.